Consider the following 539-residue polypeptide: BTB/POZ domain-containing protein 6 (539 aa).

The signal sequence occupies residues 1 to 23 (MLLPLACLHGRVAQCLTSLLVLA). The region spanning 137-207 (ADVHFIVGAL…MYSDEIDLEA (71 aa)) is the BTB domain.

The protein localises to the cytoplasm. Its function is as follows. Adapter protein for the cul3 E3 ubiquitin-protein ligase complex. Involved in late neuronal development and muscle formation. This chain is BTB/POZ domain-containing protein 6 (Btbd6), found in Mus musculus (Mouse).